The primary structure comprises 367 residues: Glutamate 5-kinase (367 aa).

Lys10 provides a ligand contact to ATP. Substrate is bound by residues Ser50, Asp137, and Asn149. Residues 169-170 (TD) and 211-217 (TGGMGTK) contribute to the ATP site. Positions 275-353 (AGEITVDEGA…QQIDAILGYE (79 aa)) constitute a PUA domain.

It belongs to the glutamate 5-kinase family.

It is found in the cytoplasm. It carries out the reaction L-glutamate + ATP = L-glutamyl 5-phosphate + ADP. It participates in amino-acid biosynthesis; L-proline biosynthesis; L-glutamate 5-semialdehyde from L-glutamate: step 1/2. Catalyzes the transfer of a phosphate group to glutamate to form L-glutamate 5-phosphate. In Citrobacter koseri (strain ATCC BAA-895 / CDC 4225-83 / SGSC4696), this protein is Glutamate 5-kinase.